The following is a 454-amino-acid chain: N-myc 2 proto-oncogene protein (454 aa).

Disordered stretches follow at residues 133-166 (EKMQ…HSGT), 231-270 (AAPP…EEEE), and 326-374 (SPYV…VRRR). Positions 256–270 (ALSDEVDEEEDEEEE) are enriched in acidic residues. The segment covering 363–374 (RKSDSEDSVRRR) has biased composition (basic and acidic residues). Residues 371-423 (VRRRNHNILERQRRNDLRSSFTTLRDHVPELVKNEKAAKVVILKKACEYVHYL) enclose the bHLH domain. The tract at residues 423–444 (LQAKEHQLLMEKEKLQARQQQL) is leucine-zipper.

Efficient DNA binding requires dimerization with another bHLH protein.

Its subcellular location is the nucleus. This Otospermophilus beecheyi (California ground squirrel) protein is N-myc 2 proto-oncogene protein (N-MYC2).